The following is a 205-amino-acid chain: Snake venom metalloproteinase BmooMPalpha-I (205 aa).

Residues 8-204 (RYIELVVVAD…HNPQCILNEP (197 aa)) form the Peptidase M12B domain. Residues Glu11 and Asp95 each contribute to the Ca(2+) site. Disulfide bonds link Cys119–Cys199, Cys159–Cys183, and Cys161–Cys166. Residue His144 coordinates Zn(2+). The active site involves Glu145. Positions 148 and 154 each coordinate Zn(2+). Positions 199 and 202 each coordinate Ca(2+).

It belongs to the venom metalloproteinase (M12B) family. P-I subfamily. In terms of assembly, monomer. Requires Zn(2+) as cofactor. As to expression, expressed by the venom gland.

The protein resides in the secreted. With respect to regulation, inhibited by EDTA. Not inhibited by the serine proteinase inhibitors aprotinin and benzamidine. In terms of biological role, snake venom zinc metalloproteinase that cleaves the alpha chain of fibrinogen (FGA) first followed by the beta chain (FGB) and shows no effect on the gamma chain. Cleaves only the beta chain of fibrin, leaving the gamma-dimer untouched. Shows proteolytic activity towards azocasein. Causes defibrinogenation when intraperitoneally administered on mice. The chain is Snake venom metalloproteinase BmooMPalpha-I from Bothrops moojeni (Lance-headed viper).